The following is a 104-amino-acid chain: MAVKIRLARFGAKKRPFYRIVVADSRAPRDGRFIERIGQYDPMLPKDNKNRVVVKADRLKHWLSVGAQATERVMWFIKKGIVDLETESKKIEKKKVEKVQGQEA.

Belongs to the bacterial ribosomal protein bS16 family.

This Wolbachia pipientis subsp. Culex pipiens (strain wPip) protein is Small ribosomal subunit protein bS16.